The following is a 229-amino-acid chain: Orotidine 5'-phosphate decarboxylase (229 aa).

Residues aspartate 9, lysine 31, 58–67, threonine 121, arginine 179, glutamine 188, glycine 208, and arginine 209 contribute to the substrate site; that span reads DLKLFDIPNT. Lysine 60 serves as the catalytic Proton donor.

This sequence belongs to the OMP decarboxylase family. Type 1 subfamily. Homodimer.

It catalyses the reaction orotidine 5'-phosphate + H(+) = UMP + CO2. It functions in the pathway pyrimidine metabolism; UMP biosynthesis via de novo pathway; UMP from orotate: step 2/2. Its function is as follows. Catalyzes the decarboxylation of orotidine 5'-monophosphate (OMP) to uridine 5'-monophosphate (UMP). The chain is Orotidine 5'-phosphate decarboxylase from Lawsonia intracellularis (strain PHE/MN1-00).